The sequence spans 140 residues: Small ribosomal subunit protein bS6 (140 aa).

A disordered region spans residues 111–140 (EHFTGPAGAEGSDDESTESTDEAVAETADA). Acidic residues predominate over residues 121 to 140 (GSDDESTESTDEAVAETADA).

Belongs to the bacterial ribosomal protein bS6 family.

Binds together with bS18 to 16S ribosomal RNA. This chain is Small ribosomal subunit protein bS6, found in Rhodopirellula baltica (strain DSM 10527 / NCIMB 13988 / SH1).